The following is a 273-amino-acid chain: Dermonecrotic toxin LhSicTox-alphaIA2biii (273 aa).

Residue His-5 is part of the active site. Residues Glu-25 and Asp-27 each coordinate Mg(2+). The active-site Nucleophile is His-41. Cystine bridges form between Cys-45–Cys-51 and Cys-47–Cys-190. A Mg(2+)-binding site is contributed by Asp-85.

It belongs to the arthropod phospholipase D family. Class II subfamily. Requires Mg(2+) as cofactor. As to expression, expressed by the venom gland.

The protein localises to the secreted. The enzyme catalyses an N-(acyl)-sphingosylphosphocholine = an N-(acyl)-sphingosyl-1,3-cyclic phosphate + choline. It catalyses the reaction an N-(acyl)-sphingosylphosphoethanolamine = an N-(acyl)-sphingosyl-1,3-cyclic phosphate + ethanolamine. It carries out the reaction a 1-acyl-sn-glycero-3-phosphocholine = a 1-acyl-sn-glycero-2,3-cyclic phosphate + choline. The catalysed reaction is a 1-acyl-sn-glycero-3-phosphoethanolamine = a 1-acyl-sn-glycero-2,3-cyclic phosphate + ethanolamine. Functionally, dermonecrotic toxins cleave the phosphodiester linkage between the phosphate and headgroup of certain phospholipids (sphingolipid and lysolipid substrates), forming an alcohol (often choline) and a cyclic phosphate. This toxin acts on sphingomyelin (SM). It may also act on ceramide phosphoethanolamine (CPE), lysophosphatidylcholine (LPC) and lysophosphatidylethanolamine (LPE), but not on lysophosphatidylserine (LPS), and lysophosphatidylglycerol (LPG). It acts by transphosphatidylation, releasing exclusively cyclic phosphate products as second products. Induces dermonecrosis, hemolysis, increased vascular permeability, edema, inflammatory response, and platelet aggregation. This chain is Dermonecrotic toxin LhSicTox-alphaIA2biii, found in Loxosceles hirsuta (Recluse spider).